Consider the following 442-residue polypeptide: Glutamyl-tRNA(Gln) amidotransferase subunit D (442 aa).

Residues 63-84 (TQTDIGSSAGAGADTEADKTES) are disordered. Positions 102 to 429 (PTVSLISTGG…PDPTNAMRKS (328 aa)) constitute an Asparaginase/glutaminase domain. Catalysis depends on residues Thr-112, Thr-188, Asp-189, and Lys-265.

Belongs to the asparaginase 1 family. GatD subfamily. As to quaternary structure, heterodimer of GatD and GatE.

It catalyses the reaction L-glutamyl-tRNA(Gln) + L-glutamine + ATP + H2O = L-glutaminyl-tRNA(Gln) + L-glutamate + ADP + phosphate + H(+). In terms of biological role, allows the formation of correctly charged Gln-tRNA(Gln) through the transamidation of misacylated Glu-tRNA(Gln) in organisms which lack glutaminyl-tRNA synthetase. The reaction takes place in the presence of glutamine and ATP through an activated gamma-phospho-Glu-tRNA(Gln). The GatDE system is specific for glutamate and does not act on aspartate. The chain is Glutamyl-tRNA(Gln) amidotransferase subunit D from Haloquadratum walsbyi (strain DSM 16790 / HBSQ001).